Consider the following 76-residue polypeptide: Putative protein StbC (76 aa).

This is Putative protein StbC (stbC) from Escherichia coli.